We begin with the raw amino-acid sequence, 270 residues long: Probable septum site-determining protein MinC (270 aa).

Belongs to the MinC family. Interacts with MinD and FtsZ.

In terms of biological role, cell division inhibitor that blocks the formation of polar Z ring septums. Rapidly oscillates between the poles of the cell to destabilize FtsZ filaments that have formed before they mature into polar Z rings. Prevents FtsZ polymerization. This is Probable septum site-determining protein MinC from Cupriavidus necator (strain ATCC 17699 / DSM 428 / KCTC 22496 / NCIMB 10442 / H16 / Stanier 337) (Ralstonia eutropha).